The following is a 370-amino-acid chain: 3-dehydroquinate synthase (370 aa).

NAD(+) is bound by residues 108-112, 132-133, Lys-145, and Lys-154; these read GVIGD and TT. Zn(2+)-binding residues include Glu-187, His-249, and His-267.

It belongs to the sugar phosphate cyclases superfamily. Dehydroquinate synthase family. It depends on Co(2+) as a cofactor. Requires Zn(2+) as cofactor. NAD(+) serves as cofactor.

Its subcellular location is the cytoplasm. It carries out the reaction 7-phospho-2-dehydro-3-deoxy-D-arabino-heptonate = 3-dehydroquinate + phosphate. The protein operates within metabolic intermediate biosynthesis; chorismate biosynthesis; chorismate from D-erythrose 4-phosphate and phosphoenolpyruvate: step 2/7. Catalyzes the conversion of 3-deoxy-D-arabino-heptulosonate 7-phosphate (DAHP) to dehydroquinate (DHQ). The sequence is that of 3-dehydroquinate synthase from Cereibacter sphaeroides (strain ATCC 17025 / ATH 2.4.3) (Rhodobacter sphaeroides).